The following is a 241-amino-acid chain: Golgi-associated RAB2 interactor protein 6 (241 aa).

The protein belongs to the GARIN family.

This is Golgi-associated RAB2 interactor protein 6 from Homo sapiens (Human).